A 1042-amino-acid polypeptide reads, in one-letter code: Atrial natriuretic peptide-converting enzyme (1042 aa).

The disordered stretch occupies residues 1–25 (MKQSPALAPEERCRRAGSPKPVLRA). At 1–45 (MKQSPALAPEERCRRAGSPKPVLRADDNNMGNGCSQKLATANLLR) the chain is on the cytoplasmic side. Residues 26-29 (DDNN) carry the DDNN motif motif. A helical; Signal-anchor for type II membrane protein transmembrane segment spans residues 46-66 (FLLLVLIPCICALVLLLVILL). Over 67 to 1042 (SYVGTLQKVY…QIYIQTFLLN (976 aa)) the chain is Extracellular. N80, N104, N135, and N141 each carry an N-linked (GlcNAc...) asparagine glycan. Residues 134-259 (RNTSACMNIT…SNVSRICFSP (126 aa)) form the FZ 1 domain. 8 disulfide bridges follow: C139–C199, C147–C192, C183–C223, C212–C256, C216–C240, C269–C282, C277–C295, and C289–C304. N-linked (GlcNAc...) asparagine glycans are attached at residues N231, N245, and N251. LDL-receptor class A domains lie at 268 to 304 (LCGR…EAHC), 305 to 340 (NCSE…EQNC), 341 to 377 (DCNP…EVNC), and 378 to 415 (SCHS…ENCS). The N-linked (GlcNAc...) asparagine glycan is linked to N305. 9 disulfides stabilise this stretch: C306–C318, C313–C331, C325–C340, C342–C355, C350–C368, C362–C377, C379–C392, C387–C405, and C399–C414. A glycan (N-linked (GlcNAc...) asparagine) is linked at N320. N-linked (GlcNAc...) asparagine glycosylation occurs at N376. N-linked (GlcNAc...) asparagine glycans are attached at residues N413, N446, N451, and N469. In terms of domain architecture, FZ 2 spans 450–573 (NNCSQCEPIT…NSDNQTCLMP (124 aa)). 14 cysteine pairs are disulfide-bonded: C455-C518, C463-C511, C502-C540, C529-C570, C533-C557, C580-C592, C587-C605, C599-C614, C616-C630, C624-C643, C637-C652, C655-C667, C662-C680, and C674-C689. N567 carries an N-linked (GlcNAc...) asparagine glycan. 3 consecutive LDL-receptor class A domains span residues 579–614 (ECSP…EENC), 615–653 (GCKE…KNCS), and 654–689 (FCQD…EWDC). N-linked (GlcNAc...) asparagine glycosylation is present at N651. One can recognise an SRCR domain in the interval 690 to 801 (VTLSINVNSS…RRPAARMNKR (112 aa)). N-linked (GlcNAc...) asparagine glycans are attached at residues N697 and N761. Disulfide bonds link C790–C912, C828–C844, C926–C991, C955–C970, and C981–C1010. In terms of domain architecture, Peptidase S1 spans 802–1035 (ILGGRTSRPG…FVEWIKRQIY (234 aa)). Residues H843 and D892 each act as charge relay system in the active site. The active-site Charge relay system is S985. The N-linked (GlcNAc...) asparagine glycan is linked to N1022.

The protein belongs to the peptidase S1 family. Post-translationally, N-glycosylated; required for processing and activation. Activated through proteolytic processing by a trypsin-like protease; cleaved into a N-terminal propeptide and an activated corin protease fragment. Different soluble forms are produced by cleavage and autocatalytic cleavage: Atrial natriuretic peptide-converting enzyme, 180 kDa soluble fragment is produced by cleavage by ADAM10, while 160 kDa and 100 kDa soluble fragments are produced by autocatalytic cleavage. Cleavage by ADAM10 to produce soluble 180 kDa soluble fragment takes place after the transmembrane region and before FZ 1. In terms of processing, a disulfide bond links the activated corin protease fragment and the N-terminal propeptide. The disulfide bond also links the activated corin protease fragment with soluble fragments (100 kDa, 160 kDa and 180 kDa fragments). Highly expressed in heart. Expressed in heart myocytes. Also expressed in pregnant uterus. Detected in blood, in plasma as well as in serum (at protein level).

It localises to the cell membrane. The protein resides in the secreted. Its activity is regulated as follows. Inhibited in a dose-dependent manner by non-specific trypsin-like serine protease inhibitors including benzamidine. Functionally, serine-type endopeptidase involved in atrial natriuretic peptide (NPPA) and brain natriuretic peptide (NPPB) processing. Converts through proteolytic cleavage the non-functional propeptides NPPA and NPPB into their active hormones, ANP and BNP(1-32) respectively, thereby regulating blood pressure in the heart and promoting natriuresis, diuresis and vasodilation. Proteolytic cleavage of pro-NPPA also plays a role in female pregnancy by promoting trophoblast invasion and spiral artery remodeling in uterus. Also acts as a regulator of sodium reabsorption in kidney. Its function is as follows. Has weaker endopeptidase activity compared to isoform 1. The polypeptide is Atrial natriuretic peptide-converting enzyme (CORIN) (Homo sapiens (Human)).